We begin with the raw amino-acid sequence, 469 residues long: Phenylalanine--tRNA ligase, mitochondrial (469 aa).

The transit peptide at 1–17 directs the protein to the mitochondrion; the sequence is MFLNRMMKTRTGLYRLY. Residues 126-129, Arg-155, 162-164, 169-171, Glu-302, and Phe-329 each bind substrate; these read SAHE, THY, and QME. In terms of domain architecture, FDX-ACB spans 372–469; the sequence is SKHPGSFRDV…LVKEYSVELR (98 aa).

This sequence belongs to the class-II aminoacyl-tRNA synthetase family. Monomer.

The protein localises to the mitochondrion matrix. The catalysed reaction is tRNA(Phe) + L-phenylalanine + ATP = L-phenylalanyl-tRNA(Phe) + AMP + diphosphate + H(+). Its function is as follows. Is responsible for the charging of tRNA(Phe) with phenylalanine in mitochondrial translation. This is Phenylalanine--tRNA ligase, mitochondrial (MSF1) from Saccharomyces cerevisiae (strain ATCC 204508 / S288c) (Baker's yeast).